Here is a 705-residue protein sequence, read N- to C-terminus: Polyribonucleotide nucleotidyltransferase (705 aa).

Residues Asp486 and Asp492 each contribute to the Mg(2+) site. The KH domain occupies 553 to 612 (PRIIKFKINPEKIRDVIGKGGAVIRALTEETGTTIDISDDGSVTIASISNEGGEQAKRRI). The S1 motif domain maps to 622 to 690 (GKIYEGTVLK…DKGRLRLSMK (69 aa)).

This sequence belongs to the polyribonucleotide nucleotidyltransferase family. Mg(2+) is required as a cofactor.

The protein localises to the cytoplasm. The enzyme catalyses RNA(n+1) + phosphate = RNA(n) + a ribonucleoside 5'-diphosphate. Its function is as follows. Involved in mRNA degradation. Catalyzes the phosphorolysis of single-stranded polyribonucleotides processively in the 3'- to 5'-direction. The polypeptide is Polyribonucleotide nucleotidyltransferase (Nitrosomonas eutropha (strain DSM 101675 / C91 / Nm57)).